We begin with the raw amino-acid sequence, 121 residues long: Probable tail terminator protein (121 aa).

Belongs to the Skunalikevirus tail terminator protein family. As to quaternary structure, homohexamer. Interacts with the tail tube protein.

Its subcellular location is the virion. In terms of biological role, plays an essential role in tail assembly by capping the rapidly polymerizing tail once it has reached its requisite length and serving as the interaction surface for the connector and the tail tube proteins. The sequence is that of Probable tail terminator protein from Lactococcus lactis (Lactococcus lactis bacteriophage p2).